The sequence spans 425 residues: Endoplasmic reticulum junction formation protein lunapark (425 aa).

Residue Gly2 is the site of N-myristoyl glycine attachment. The Cytoplasmic portion of the chain corresponds to 2 to 45; the sequence is GGLFSRWRAKPSTVEVLENIDKEIQALEEFREKNQRLQKLWVGR. Residues 15–41 adopt a coiled-coil conformation; sequence VEVLENIDKEIQALEEFREKNQRLQKL. The helical transmembrane segment at 46–66 threads the bilayer; the sequence is LIIYSSILYLFTCLIVYLWYL. Over 67–77 the chain is Lumenal; sequence PDEFTARLVMT. A helical transmembrane segment spans residues 78–98; sequence LPFFAFPLIIWTLRTVLIFFF. Topologically, residues 99–425 are cytoplasmic; that stretch reads SKRTERNNEA…EPSEESLVTK (327 aa). Residues 101–128 adopt a coiled-coil conformation; it reads RTERNNEALDDLKSQKKKILEEVMEKET. 5 positions are modified to phosphoserine: Ser114, Ser153, Ser177, Ser182, and Ser194. Residues 144-242 are disordered; the sequence is KKAKEFEPPS…HPPGPPLARP (99 aa). The span at 186 to 195 shows a compositional bias: pro residues; it reads GPPPQGPVSP. Thr211 carries the phosphothreonine modification. Position 222 is a phosphoserine (Ser222). The C4-type; plays a role in ER morphology zinc finger occupies 271–296; sequence CQQCFSHNGMALKEEFEYIAFRCAYC. Phosphoserine occurs at positions 316, 348, and 380. The segment at 320-425 is disordered; sequence RQAVEGSSST…EPSEESLVTK (106 aa). Positions 384-398 are enriched in acidic residues; that stretch reads EPAENQEETENEETS. Ser411 carries the phosphoserine modification.

This sequence belongs to the lunapark family. As to quaternary structure, homodimer; homodimerization requires the C4-type zinc finger motif and decreases during mitosis in a phosphorylation-dependent manner. Myristoylated; myristoylation is necessary for the endoplasmic reticulum (ER) three-way ER tubular junction formation, but is not required neither for membrane translocation, membrane topology formation, nor for the specific localization to ER membranes. Post-translationally, phosphorylated. Phosphorylation occurs at Ser-177, Ser-182, Ser-222, Ser-316 and Ser-380 during interphase. Phosphorylation occurs at Ser-114, Ser-153, Ser-194, Thr-211 and Ser-348 during mitosis; these phosphorylations reduce both its homodimerization and the ER three-way tubular junction formation. In terms of processing, subject to proteasomal degradation following phosphorylation during mitosis. As to expression, expressed in most tissues at basal level, with reinforcement in distal limb buds, genital bud, and in parts of the central nervous system.

Its subcellular location is the endoplasmic reticulum membrane. Functionally, endoplasmic reticulum (ER)-shaping membrane protein that plays a role in determining ER morphology. Involved in the stabilization of nascent three-way ER tubular junctions within the ER network. May also play a role as a curvature-stabilizing protein within three-way ER tubular junction network. May be involved in limb and central nervous system development. This is Endoplasmic reticulum junction formation protein lunapark from Mus musculus (Mouse).